Reading from the N-terminus, the 334-residue chain is Atypical chemokine receptor 1 (334 aa).

The Extracellular segment spans residues 1 to 61 (MGNCLYPVET…CNLLDRSSLP (61 aa)). Residues N16, N26, and N32 are each glycosylated (N-linked (GlcNAc...) asparagine). 2 cysteine pairs are disulfide-bonded: C49/C274 and C127/C193. A helical transmembrane segment spans residues 62–82 (FFMLTSVLGMLASGSILFAIL). Residues 83–93 (RPFFHWQICPS) are Cytoplasmic-facing. The chain crosses the membrane as a helical span at residues 94 to 114 (WPILAELAVGSALFSIAVPIL). Topologically, residues 115–127 (APGLHSAHSTALC) are extracellular. Residues 128 to 151 (NLGYWVWYTSAFAQALLIGCYACL) traverse the membrane as a helical segment. The Cytoplasmic segment spans residues 152 to 164 (NPRLNIGQLRGFT). Residues 165 to 185 (LGLSVGLWGAAALSGLPVALA) form a helical membrane-spanning segment. The Extracellular portion of the chain corresponds to 186-205 (SDVYNGFCTFPSSRDMEALK). The chain crosses the membrane as a helical span at residues 206-226 (YTHYAICFTIFTVLPLTLLAA). The Cytoplasmic segment spans residues 227–242 (KGLKIALSKGPGPWVS). Residues 243-263 (VLWIWFIFWWPHGMVLIFDAL) form a helical membrane-spanning segment. Residues 264–285 (VRSKTVLLYTCQSQKILDAMLN) lie on the Extracellular side of the membrane. Residue N285 is glycosylated (N-linked (GlcNAc...) asparagine). A helical transmembrane segment spans residues 286-306 (VTEALSMLHCVATPLLLALFC). The Cytoplasmic segment spans residues 307-334 (HQTTRRSLSSLSLPTRQASQMDALAGKS).

It belongs to the G-protein coupled receptor 1 family. Atypical chemokine receptor subfamily. As to expression, expressed in liver and brain.

The protein localises to the early endosome. Its subcellular location is the recycling endosome. It is found in the membrane. Atypical chemokine receptor that controls chemokine levels and localization via high-affinity chemokine binding that is uncoupled from classic ligand-driven signal transduction cascades, resulting instead in chemokine sequestration, degradation, or transcytosis. Also known as interceptor (internalizing receptor) or chemokine-scavenging receptor or chemokine decoy receptor. Has a promiscuous chemokine-binding profile, interacting with inflammatory chemokines of both the CXC and the CC subfamilies but not with homeostatic chemokines. Acts as a receptor for chemokines including CCL2, CCL5, CCL7, CCL11, CCL13, CCL14, CCL17, CXCL5, CXCL6, IL8/CXCL8, CXCL11, GRO, RANTES, MCP-1 and TARC. May regulate chemokine bioavailability and, consequently, leukocyte recruitment through two distinct mechanisms: when expressed in endothelial cells, it sustains the abluminal to luminal transcytosis of tissue-derived chemokines and their subsequent presentation to circulating leukocytes; when expressed in erythrocytes, serves as blood reservoir of cognate chemokines but also as a chemokine sink, buffering potential surges in plasma chemokine levels. In terms of biological role, (Microbial infection) Acts as a receptor for the malaria parasite Plasmodium yoelii in mature erythrocytes but not reticulocytes. This is Atypical chemokine receptor 1 (Ackr1) from Mus musculus (Mouse).